A 279-amino-acid polypeptide reads, in one-letter code: BEN domain-containing protein 6 (279 aa).

The segment covering 1–15 (MQKIVQTDEITNTQA) has biased composition (polar residues). 2 disordered regions span residues 1–65 (MQKI…LAEL) and 134–172 (RATNNSSPDSFASTCSNSNSNSSSPVSLKPEEEHQTDEK). A coiled-coil region spans residues 62-99 (LAELSKEELCAKIKSLKEKLTNTRKENSRLRQSLVMLQ). Positions 134-148 (RATNNSSPDSFASTC) are enriched in polar residues. The segment covering 162–172 (KPEEEHQTDEK) has biased composition (basic and acidic residues). The region spanning 171 to 271 (EKQFQIEKWQ…NCTKKPNLSK (101 aa)) is the BEN domain.

As to quaternary structure, interacts (via BEN domain) with RBPJ.

The protein localises to the nucleus. Functionally, acts as a corepressor of recombining binding protein suppressor hairless (RBPJ) and inhibits Notch signaling in neural stem cells, thereby opposing their self-renewal and promoting neurogenesis. In Homo sapiens (Human), this protein is BEN domain-containing protein 6 (BEND6).